Reading from the N-terminus, the 361-residue chain is MGGDIFGRELRLISFGESHGPVVGAIVEGAPAGLPLSEEDVQRILDLRRPGQSELVSQRAERDRVEILSGVFNGFTTGAPISMIVRNEDIDSSYYEEISRFPRPGHADYVARLKYSGYNDFRGGGRFSGRLTVSMCMAGAVAMKILEKLGIEVMAYSLEIGGERAEGFTLDDARNYRYMNPVRAPNEESYLRMAAAIERARREGDSLGGIVEAIALNVPPGLGEPIFDTIEGDIAKAMFSIPAVKGVEFGSGFRAARMRGSEHNDPIRVIDGKIRYKKNDHGGAIGGITTGEPIILRVAFKPTPSIAKPQETVDLELLRNVEIKVKGRHDPCVVPRAVVVVESMLAFTIADHIMRSMRGAI.

Residue arginine 48 coordinates NADP(+). FMN contacts are provided by residues 126–128, glycine 286, 301–305, and arginine 328; these read RFS and KPTPS.

It belongs to the chorismate synthase family. FMNH2 is required as a cofactor.

The catalysed reaction is 5-O-(1-carboxyvinyl)-3-phosphoshikimate = chorismate + phosphate. It participates in metabolic intermediate biosynthesis; chorismate biosynthesis; chorismate from D-erythrose 4-phosphate and phosphoenolpyruvate: step 7/7. Functionally, catalyzes the anti-1,4-elimination of the C-3 phosphate and the C-6 proR hydrogen from 5-enolpyruvylshikimate-3-phosphate (EPSP) to yield chorismate, which is the branch point compound that serves as the starting substrate for the three terminal pathways of aromatic amino acid biosynthesis. This reaction introduces a second double bond into the aromatic ring system. The protein is Chorismate synthase of Korarchaeum cryptofilum (strain OPF8).